A 389-amino-acid chain; its full sequence is (2R)-sulfolactate sulfo-lyase subunit beta (389 aa).

It belongs to the UxaA family. In terms of assembly, (2R)-sulfolactate sulfo-lyase is composed of a SuyA and a SuyB subunit.

It is found in the cytoplasm. The enzyme catalyses (2R)-3-sulfolactate = sulfite + pyruvate + H(+). Together with SuyA, desulfonates sulfolactate to pyruvate and sulfite. The polypeptide is (2R)-sulfolactate sulfo-lyase subunit beta (suyB) (Chromohalobacter salexigens (strain ATCC BAA-138 / DSM 3043 / CIP 106854 / NCIMB 13768 / 1H11)).